We begin with the raw amino-acid sequence, 37 residues long: Large ribosomal subunit protein bL36 (37 aa).

Belongs to the bacterial ribosomal protein bL36 family.

The protein is Large ribosomal subunit protein bL36 (rpmJ) of Geobacillus stearothermophilus (Bacillus stearothermophilus).